Reading from the N-terminus, the 488-residue chain is UL37 immediate early glycoprotein (488 aa).

An N-terminal signal peptide occupies residues 1–22; the sequence is MSPVYVNLLGSVGLLAFWYFSY. The span at 83 to 107 shows a compositional bias: acidic residues; the sequence is GEESVTEDTEREDTEEEREDEEEEN. A disordered region spans residues 83–119; the sequence is GEESVTEDTEREDTEEEREDEEEENEARTPEVNPMDA. N206, N210, N219, N223, N242, N275, N281, N294, N297, N306, N333, N337, N343, N384, and N391 each carry an N-linked (GlcNAc...) asparagine; by host glycan. Residues 439–459 traverse the membrane as a helical segment; it reads ICTVAAGSIALLSLFCILLIG.

This sequence belongs to the immediate early glycoprotein family. Interacts with host BAX. Interacts with host RSAD2/viperin; this interaction results in RSAD2/viperin relocalization from the endoplasmic reticulum to the mitochondria, actin cytoskeleton disruption and enhancement of infection. Interacts with host PEX19; this interaction inhibits the peroxisomal-dependent antiviral signaling. Interacts with host CHCHD6; this interaction rewires mitochondria by engaging the conserved MICOS complex.

It is found in the host membrane. The protein resides in the host endoplasmic reticulum membrane. It localises to the host Golgi apparatus membrane. Its subcellular location is the host mitochondrion membrane. The protein localises to the host peroxisome. Multifunctional transmembrane protein that plays several key roles in viral replication. Rapidely traffics from the host endoplasmic reticulum to the outer mitochondrial membrane where it acts to inhibit host immune response, block apoptotic signaling, regulate calcium flux, and induce mitochondrial fragmentation. Sequesters proapoptotic BAX at the outer mitochondrial membrane and prevents cytochrome c release and subsequent initiation of the proapoptotic cascade. Also provoques a calcium efflux from host endoplasmic reticulum and F-actin cytoskeleton disruption. Participates in the increase of host mitochondrial biogenesis, thus promoting viral replication by efficient use of newly made mitochondria. Additionally, a subset of vMIA localizes to peroxisomes, causing fragmentation and blocking peroxisomal MAVS signaling. Mechanistically, inhibits host MAVS oligomerization at peroxisomes in a mitochondrial fission factors (MFF)-dependent manner and in mitochondria independently of mitochondrial fission factors. Plays an essential role in the trafficking of host viperin/RSAD2 from the endoplasmic reticulum to the viral assembly compartment via the mitochondria during viral infection as failure of viperin to localize to the mitochondria results in insufficient lipogenesis and thus reduces viral replication. In terms of biological role, may play a role in escape from the host antiviral response. This chain is UL37 immediate early glycoprotein (UL37), found in Homo sapiens (Human).